The chain runs to 278 residues: HTH-type transcriptional activator RhaS (278 aa).

Residues 174-272 (NQLMAWLEDH…NWSPRDIRQG (99 aa)) form the HTH araC/xylS-type domain. 2 DNA-binding regions (H-T-H motif) span residues 191–212 (EAVA…KQHT) and 239–262 (VTEI…RREF).

Binds DNA as a dimer.

Its subcellular location is the cytoplasm. Its function is as follows. Activates expression of the rhaBAD and rhaT operons. The polypeptide is HTH-type transcriptional activator RhaS (Salmonella enteritidis PT4 (strain P125109)).